The following is a 308-amino-acid chain: UDP-N-acetylenolpyruvoylglucosamine reductase (308 aa).

Residues 32 to 196 form the FAD-binding PCMH-type domain; it reads VGGPAARLYK…ISAKLQLSPG (165 aa). The active site involves Arg-176. Catalysis depends on Ser-225, which acts as the Proton donor. Residue Glu-296 is part of the active site.

This sequence belongs to the MurB family. The cofactor is FAD.

It localises to the cytoplasm. It carries out the reaction UDP-N-acetyl-alpha-D-muramate + NADP(+) = UDP-N-acetyl-3-O-(1-carboxyvinyl)-alpha-D-glucosamine + NADPH + H(+). It functions in the pathway cell wall biogenesis; peptidoglycan biosynthesis. Its function is as follows. Cell wall formation. The sequence is that of UDP-N-acetylenolpyruvoylglucosamine reductase from Legionella pneumophila subsp. pneumophila (strain Philadelphia 1 / ATCC 33152 / DSM 7513).